The following is a 742-amino-acid chain: Phosphatidylinositol 4-phosphate 5-kinase its3 (742 aa).

2 disordered regions span residues 1 to 21 and 82 to 228; these read MKIDSNGIVNPHSITNEIPSY and LFKE…PDIG. 2 stretches are compositionally biased toward low complexity: residues 90–105 and 129–142; these read PSNPTAHSPSSSSNDS and PSSNSSSSPQLQNL. Composition is skewed to polar residues over residues 158–181 and 193–218; these read RSSSNPVTSSQQPPNDRSTLSSSQ and EKNSSNAEPSGSRSGDRGTNVSTSGS. Residues 264–662 form the PIPK domain; it reads GHENYVTAYN…RFYKFVESSI (399 aa). Residues 677–742 form a disordered region; it reads QDGQRVNKQQ…RNVTTNTSSS (66 aa). A compositionally biased stretch (polar residues) spans 680-719; sequence QRVNKQQSVNAGNVRTNNKHGSLNNNTAPSSRNAKSTSAH.

As to quaternary structure, interacts with opy1 (via domain PH 1); the interaction is direct but opy1 does not appear to regulate its3 localization or function. In terms of processing, phosphorylated by casein kinase I. Phosphorylation inactivates the enzyme.

The protein localises to the cell membrane. It catalyses the reaction a 1,2-diacyl-sn-glycero-3-phospho-(1D-myo-inositol 4-phosphate) + ATP = a 1,2-diacyl-sn-glycero-3-phospho-(1D-myo-inositol-4,5-bisphosphate) + ADP + H(+). In terms of biological role, catalyzes the phosphorylation of phosphatidylinositol 4-phosphate on the fifth hydroxyl of the myo-inositol ring, to form phosphatidylinositol 4,5-bisphosphate. Involved, together with the calcineurin ppb1, in cytokinesis. This is Phosphatidylinositol 4-phosphate 5-kinase its3 (its3) from Schizosaccharomyces pombe (strain 972 / ATCC 24843) (Fission yeast).